The chain runs to 61 residues: Rubredoxin 3 (61 aa).

Residues 1-53 form the Rubredoxin-like domain; that stretch reads MSSYRCPVCEYVYDESKGAPREGFPAGTPWDAVPDDWCCPDCGVREKLDFEPM. Fe cation-binding residues include Cys6, Cys9, Cys39, and Cys42.

Belongs to the rubredoxin family. Fe(3+) is required as a cofactor.

Functionally, involved in the hydrocarbon hydroxylating system, which transfers electrons from NADH to rubredoxin reductase and then through rubredoxin to alkane 1 monooxygenase. This Rhodococcus erythropolis (Arthrobacter picolinophilus) protein is Rubredoxin 3 (rubA3).